We begin with the raw amino-acid sequence, 411 residues long: Argininosuccinate synthase (411 aa).

ATP-binding positions include 10–18 (AYSGGLDTS) and Ala37. Residues Tyr89 and Ser94 each coordinate L-citrulline. ATP is bound at residue Gly119. L-aspartate-binding residues include Thr121, Asn125, and Asp126. L-citrulline is bound at residue Asn125. The L-citrulline site is built by Arg129, Ser178, Ser187, Glu263, and Tyr275.

It belongs to the argininosuccinate synthase family. Type 1 subfamily. As to quaternary structure, homotetramer.

The protein resides in the cytoplasm. The catalysed reaction is L-citrulline + L-aspartate + ATP = 2-(N(omega)-L-arginino)succinate + AMP + diphosphate + H(+). It participates in amino-acid biosynthesis; L-arginine biosynthesis; L-arginine from L-ornithine and carbamoyl phosphate: step 2/3. This chain is Argininosuccinate synthase, found in Aeromonas salmonicida (strain A449).